Reading from the N-terminus, the 294-residue chain is MTMTHAQNNHHARLIDGKQVAADVRANVAEGVKARIDSGLRPPGLAVVLVGEDPASQVYVKNKTKACEEVGFLSQKYTLEESTTEEELLKLIDTLNEDNAIDGILVQLPLPTHMDADNILERIKPDKDVDGFHPYNLGRLAQRMPVLRPCTPKGIMTLLARTGVELRGKDALVVGASNIVGRPMGLELLLAGCTVTITHRFTVNLPAKVSQADIVVVAVGRPGIVKGEWIKPGAIVIDVGINRRDDGALVGDIEFNEAAERASWITPVPGGVGPMTVATLMENTLYAANHLHKD.

Residues 175–177 (GAS) and isoleucine 241 each bind NADP(+).

Belongs to the tetrahydrofolate dehydrogenase/cyclohydrolase family. Homodimer.

The catalysed reaction is (6R)-5,10-methylene-5,6,7,8-tetrahydrofolate + NADP(+) = (6R)-5,10-methenyltetrahydrofolate + NADPH. It catalyses the reaction (6R)-5,10-methenyltetrahydrofolate + H2O = (6R)-10-formyltetrahydrofolate + H(+). Its pathway is one-carbon metabolism; tetrahydrofolate interconversion. Its function is as follows. Catalyzes the oxidation of 5,10-methylenetetrahydrofolate to 5,10-methenyltetrahydrofolate and then the hydrolysis of 5,10-methenyltetrahydrofolate to 10-formyltetrahydrofolate. This Hahella chejuensis (strain KCTC 2396) protein is Bifunctional protein FolD.